A 1154-amino-acid chain; its full sequence is CRISPR-associated endoribonuclease Cas13a (1154 aa).

HEPN-like fold stretches follow at residues 330-466 and 923-1154; these read TTSN…RFIN and FVHL…EMKK.

This sequence belongs to the CRISPR-associated endoribonuclease Cas13a family. Requires a divalent metal cation as cofactor.

With respect to regulation, target RNA acts as an activator for non-specific ssRNA degradation. CRISPR (clustered regularly interspaced short palindromic repeat), is an adaptive immune system that provides protection against mobile genetic elements (viruses, transposable elements and conjugative plasmids). CRISPR clusters contain sequences complementary to antecedent mobile elements and target invading nucleic acids. Unlike many single-component effectors, this CRISPR-Cas system targets RNA. CRISPR clusters are transcribed from pre-CRISPR RNA (crRNA) and processed into crRNA by this protein. Cleaves linear target ssRNA in a pre-crRNA-dependent fashion, preferentially before U residues. Binding a viable target RNA target activates this protein for non-specific RNA degradation in vitro (called collateral RNA degradation), which is fairly sensitive as it requires picomolar levels of viable target RNA. The protein is CRISPR-associated endoribonuclease Cas13a of Paludibacter propionicigenes (strain DSM 17365 / JCM 13257 / WB4).